Consider the following 326-residue polypeptide: tRNA-modifying protein YgfZ (326 aa).

2 residues coordinate folate: tryptophan 27 and tryptophan 189.

This sequence belongs to the tRNA-modifying YgfZ family.

It is found in the cytoplasm. Functionally, folate-binding protein involved in regulating the level of ATP-DnaA and in the modification of some tRNAs. It is probably a key factor in regulatory networks that act via tRNA modification, such as initiation of chromosomal replication. In Salmonella paratyphi C (strain RKS4594), this protein is tRNA-modifying protein YgfZ.